Reading from the N-terminus, the 103-residue chain is NADH-quinone oxidoreductase subunit K (103 aa).

Helical transmembrane passes span 7–27 (TEHG…GVLV), 31–51 (LIFM…AFIV), and 65–85 (FMLI…LILL).

The protein belongs to the complex I subunit 4L family. As to quaternary structure, NDH-1 is composed of 14 different subunits. Subunits NuoA, H, J, K, L, M, N constitute the membrane sector of the complex.

Its subcellular location is the cell inner membrane. The enzyme catalyses a quinone + NADH + 5 H(+)(in) = a quinol + NAD(+) + 4 H(+)(out). Its function is as follows. NDH-1 shuttles electrons from NADH, via FMN and iron-sulfur (Fe-S) centers, to quinones in the respiratory chain. The immediate electron acceptor for the enzyme in this species is believed to be ubiquinone. Couples the redox reaction to proton translocation (for every two electrons transferred, four hydrogen ions are translocated across the cytoplasmic membrane), and thus conserves the redox energy in a proton gradient. The sequence is that of NADH-quinone oxidoreductase subunit K from Nitrosococcus oceani (strain ATCC 19707 / BCRC 17464 / JCM 30415 / NCIMB 11848 / C-107).